A 311-amino-acid polypeptide reads, in one-letter code: Deoxyhypusine hydroxylase (311 aa).

HEAT-like PBS-type repeat units lie at residues 69 to 95 (LKHEVAYVLGQTKNLHAAQYLRSVLEN), 102 to 128 (VRHEAAEALGALGDKDSLALLEDYFKN), 196 to 222 (ERYRAMFRLRDMGTDEACLALASGLDD), 228 to 254 (FKHEIAYVFGQLCNPVTVPALIKTLKD), and 261 to 287 (VRHEAAEALGSIATDECLPVLQSFLND). The Fe cation site is built by His71, Glu72, His104, and Glu105. Residues His230, Glu231, His263, and Glu264 each contribute to the Fe cation site.

This sequence belongs to the deoxyhypusine hydroxylase family. Fe(2+) serves as cofactor.

It is found in the cytoplasm. It localises to the nucleus. It catalyses the reaction [eIF5A protein]-deoxyhypusine + AH2 + O2 = [eIF5A protein]-hypusine + A + H2O. It functions in the pathway protein modification; eIF5A hypusination. Its function is as follows. Catalyzes the hydroxylation of the N(6)-(4-aminobutyl)-L-lysine intermediate to form hypusine, an essential post-translational modification only found in mature eIF-5A factor. The sequence is that of Deoxyhypusine hydroxylase from Debaryomyces hansenii (strain ATCC 36239 / CBS 767 / BCRC 21394 / JCM 1990 / NBRC 0083 / IGC 2968) (Yeast).